The primary structure comprises 155 residues: Ribosome maturation factor RimP (155 aa).

The protein belongs to the RimP family.

Its subcellular location is the cytoplasm. In terms of biological role, required for maturation of 30S ribosomal subunits. This Prochlorococcus marinus (strain MIT 9515) protein is Ribosome maturation factor RimP.